Consider the following 253-residue polypeptide: ATP synthase subunit a (253 aa).

Transmembrane regions (helical) follow at residues 27–47, 87–107, 117–137, 146–166, 196–216, and 224–244; these read ISFTNASGFMLLGVVLVIGFF, FFPFVFTLFFFILFANLIGMV, IIVTGALAMTVILMVIVVGLI, LFAPSGAPLPIYIILTPIEII, FTVMLIGAGAIYIPVAALAFA, and LEFLVAGLQAYVFAILTCVYL.

Belongs to the ATPase A chain family. As to quaternary structure, F-type ATPases have 2 components, CF(1) - the catalytic core - and CF(0) - the membrane proton channel. CF(1) has five subunits: alpha(3), beta(3), gamma(1), delta(1), epsilon(1). CF(0) has three main subunits: a(1), b(2) and c(9-12). The alpha and beta chains form an alternating ring which encloses part of the gamma chain. CF(1) is attached to CF(0) by a central stalk formed by the gamma and epsilon chains, while a peripheral stalk is formed by the delta and b chains.

The protein resides in the cell inner membrane. Its function is as follows. Key component of the proton channel; it plays a direct role in the translocation of protons across the membrane. In Hyphomonas neptunium (strain ATCC 15444), this protein is ATP synthase subunit a.